The sequence spans 716 residues: MNYGAADERWANPPQPVAAAEHGPSFDHSMVSEEYEHDKKKNPAQKEGISFSQALLASGHEKSDGKIKLTARSFMEVGGYAVFLIVLVYVAFAQNSIQSYYYSKVMSDLFVASTGASGAPAFGSCTSMDNIWDWLSQVLIPGIYWTETSNSTDNENMIYYENRLLGEPRIRMLKVTNDSCTVMKSFQREIKECFANYEEKLEDKTMVGDGSVDAFIYATAKELENLKTVGTIASYGGGGFVQRLPVAGSTEAQSAIATLKANRWIDRGSRAIIVDFALYNANINLFCVVKLLFELPASGGVITTPKLMTYDLLTYQTSGGTRMMIFEGIFCGFILYFIFEELFAIGRHRLHYLTQFWNLVDVVLLGFSVATIILSVNRTKTGVNRVNSVIENGLTNAPFDDVTSSENSYLNIKACVVFVAWVKVFKFISVNKTMSQLSSTLTRSAKDIGGFAVMFAVFFFAFAQFGYLCFGTQIADYSNLYNSAFALLRLILGDFNFSALESCNRFFGPAFFIAYVFFVSFILLNMFLAIINDSYVEVKAELARKKDGEGILDWFMNKVRGLTKRGKRPDAPGEDATYEDYKLMLYRAGYAEKDINEAFTRFNVTSMTEHVPEKVAEDIADEVARMTEQKRNYMENHRDYANLNRRVDQMQESVFSIVDRIEGVNATLQTIEKQRVQQQDGGNLMDLSALLTNQVRNRESAARRPTITSIADKKEE.

2 stretches are compositionally biased toward basic and acidic residues: residues 1–10 and 30–41; these read MNYGAADERW and MVSEEYEHDKKK. The disordered stretch occupies residues 1–44; that stretch reads MNYGAADERWANPPQPVAAAEHGPSFDHSMVSEEYEHDKKKNPA. The Cytoplasmic segment spans residues 1–72; sequence MNYGAADERW…SDGKIKLTAR (72 aa). The helical transmembrane segment at 73–93 threads the bilayer; the sequence is SFMEVGGYAVFLIVLVYVAFA. The Extracellular portion of the chain corresponds to 94-324; that stretch reads QNSIQSYYYS…YQTSGGTRMM (231 aa). 2 N-linked (GlcNAc...) asparagine glycosylation sites follow: N150 and N177. A disulfide bridge links C180 with C193. Residues 325 to 345 form a helical membrane-spanning segment; it reads IFEGIFCGFILYFIFEELFAI. Over 346–355 the chain is Cytoplasmic; it reads GRHRLHYLTQ. The helical transmembrane segment at 356–376 threads the bilayer; the sequence is FWNLVDVVLLGFSVATIILSV. N-linked (GlcNAc...) asparagine glycosylation occurs at N377. The Extracellular portion of the chain corresponds to 377-409; that stretch reads NRTKTGVNRVNSVIENGLTNAPFDDVTSSENSY. Residues 410 to 430 traverse the membrane as a helical segment; that stretch reads LNIKACVVFVAWVKVFKFISV. The Cytoplasmic portion of the chain corresponds to 431-447; the sequence is NKTMSQLSSTLTRSAKD. A helical transmembrane segment spans residues 448-468; sequence IGGFAVMFAVFFFAFAQFGYL. The Extracellular segment spans residues 469 to 482; it reads CFGTQIADYSNLYN. The segment at residues 483-497 is an intramembrane region (pore-forming); the sequence is SAFALLRLILGDFNF. Topologically, residues 498–510 are extracellular; the sequence is SALESCNRFFGPA. A helical membrane pass occupies residues 511–531; that stretch reads FFIAYVFFVSFILLNMFLAII. Residues 532 to 716 are Cytoplasmic-facing; that stretch reads NDSYVEVKAE…ITSIADKKEE (185 aa). Phosphoserine; by CK2 is present on S534. Residues 613–680 adopt a coiled-coil conformation; sequence EKVAEDIADE…IEKQRVQQQD (68 aa). The interval 696 to 716 is disordered; it reads RNRESAARRPTITSIADKKEE.

The protein belongs to the polycystin family. Phosphorylated. CK2 (kin-3 and kin-10) and calcineurin act antagonistically to regulate the phosphorylation state. In terms of tissue distribution, exclusively expressed in a subset of 3 categories of adult male sensory neurons: ray neurons, hook neurons and head cephalic (CEM) neurons. Expressed in the male tail.

The protein resides in the cell membrane. Its subcellular location is the cell projection. It localises to the cilium membrane. It is found in the cilium. The protein localises to the axon. The protein resides in the dendrite. Its subcellular location is the perikaryon. It localises to the endoplasmic reticulum membrane. Its function is as follows. Functions as a calcium permeable cation channel. Required for 2 aspects of male mating behavior: response to hermaphrodite contact and vulva location. Acts in the same pathway as lov-1 and atp-2 in response behavior. In Caenorhabditis elegans, this protein is Polycystin-2.